The chain runs to 445 residues: MADRNDQILTPSQLNSLARDLLEGSFPLVWVEAELSSVTRPASGHLYFTLKDARAQIRCAMFKPKSTWLKFQPREGLRVLARGRLTLYEARGDYQLVLDHMEEAGEGALRRAFDELRARLAAEGLFDAERKQALPAHVQRLAVITSPSGAAVRDVLSVLARRFPLLEVDLLPSLVQGDSAAAQITSLLQRADASGRYDVILITRGGGSLEDLWAFNDERLARAIAAAQTPVVSAVGHETDFSLSDFVADVRAPTPSVAAELLVPDQRELVARVRRAQARMTQLQQHALGNAMQRADRLALRLRAQSPQARLQLLHRRQQDAGRQLRARMMQVLERLQARVQQGQAQLQAHNPQRQLAGLQQRLRALHPQAAMQRRLQHDQLQLRSIARSLEAVSPLATVARGYAIVTRPADGSVVRSAAEVVTGERLRAQLADGSIQVRVESGES.

This sequence belongs to the XseA family. As to quaternary structure, heterooligomer composed of large and small subunits.

It localises to the cytoplasm. The catalysed reaction is Exonucleolytic cleavage in either 5'- to 3'- or 3'- to 5'-direction to yield nucleoside 5'-phosphates.. Functionally, bidirectionally degrades single-stranded DNA into large acid-insoluble oligonucleotides, which are then degraded further into small acid-soluble oligonucleotides. In Xanthomonas euvesicatoria pv. vesicatoria (strain 85-10) (Xanthomonas campestris pv. vesicatoria), this protein is Exodeoxyribonuclease 7 large subunit.